A 254-amino-acid polypeptide reads, in one-letter code: Cobalt transport protein CbiM (254 aa).

A signal peptide spans 1-31 (MKTILRPFTLLSRSIFLALFVLFLWSPDAHA). 6 helical membrane passes run 37–57 (GFLP…FLVV), 74–94 (LLLA…IPSV), 106–126 (LGAV…VLLF), 128–148 (ALLL…SMAI), 169–189 (WLAV…VTSL), and 212–232 (IFAL…VMVF).

Belongs to the CbiM family. In terms of assembly, forms an energy-coupling factor (ECF) transporter complex composed of an ATP-binding protein (A component, CbiO), a transmembrane protein (T component, CbiQ) and 2 possible substrate-capture proteins (S components, CbiM and CbiN) of unknown stoichimetry.

It is found in the cell inner membrane. Its pathway is cofactor biosynthesis; adenosylcobalamin biosynthesis. In terms of biological role, part of the energy-coupling factor (ECF) transporter complex CbiMNOQ involved in cobalt import. This Chlorobium limicola (strain DSM 245 / NBRC 103803 / 6330) protein is Cobalt transport protein CbiM.